A 458-amino-acid chain; its full sequence is MKKQNPWISLSEEEKNQIFNFSENYKKFISKFKTEREVASYALDKAKKKGFLNAEEKKNLMPGDKIFYTCREKTVAFAIIGKNPIENGMNLIVSHTDSPRLDAKPSPISEENELVFLKTNYYGGIKKYQWLSTPLSIRGVIFLKNGEKVEINIGDNENDPVFIIPDILPHLDRKIQRNKKSDEIIEGENLKILIGSLPIETKEKNKVKLATLQLIKEKYKIEEEDFVSSEIEIVPAGTAKDVGFDKALIGAYGQDDKICVYTSLESIFDLEEIPNKTAICFLVDKEEIGSTGSTGLDSRYLEYFVSDMIFKIKKSEYNNLHVQKALWNSKSISADVCAAINPLFSSVHDEQNAPKLGYGIPIMKYTGHGGKSMASDADAELVSYIRQLLNKNNIAWQVATLGKVEEGGGGTVAKFLAGYGIRTIDMGPAVISMHSPMEITSKFDLYNAYLAYKAFYKE.

Residues His95, His170, and His434 each coordinate Zn(2+).

The protein belongs to the peptidase M18 family. Zn(2+) is required as a cofactor.

The polypeptide is Probable M18 family aminopeptidase 1 (Borreliella afzelii (strain PKo) (Borrelia afzelii)).